The sequence spans 137 residues: Large ribosomal subunit protein uL16 (137 aa).

It belongs to the universal ribosomal protein uL16 family. In terms of assembly, part of the 50S ribosomal subunit.

In terms of biological role, binds 23S rRNA and is also seen to make contacts with the A and possibly P site tRNAs. This chain is Large ribosomal subunit protein uL16, found in Pseudomonas entomophila (strain L48).